The sequence spans 414 residues: MFQALAKASAALGPRAAGWVRTMASHQLLVAPPKALLKPLSIPTRLLLGPGPSNLPPRTMAAGGLQMLGHMHKETYQIMDEIKEGIQYVFQTRNPLTLVISGSGHCALEAALINVLEPGDSFLVGVNGIWGQRAADIGERLGARVHPMTKDPGGHYTLQEVEEGLAQHKPVLLFLTHGESSSGVLQPLDGFGELCHRYKCLLLVDSVASLGGAPLYMDQQGIDILYSGSQKVLNAPPGTSLLSFSDTAKNKIYSRKTKPSSFYLDVKYLANLWGCDGQPRMYHHTTPVVSLYSLREGLALLSEQGLENSWRKHREAAAYLHGRLQALGLRLFVKDPALRLPTVTTVAVPTGYDWRDIVSYLIERFGIEITGGLGPSTGKVLRIGLMGCNATRENVDLVTEALREALQHCPKKKL.

The N-terminal 23 residues, 1–23 (MFQALAKASAALGPRAAGWVRTM), are a transit peptide targeting the mitochondrion. Lys231 carries the post-translational modification N6-(pyridoxal phosphate)lysine. Lys256 and Lys334 each carry N6-acetyllysine. Residue Arg382 participates in substrate binding.

It belongs to the class-V pyridoxal-phosphate-dependent aminotransferase family. In terms of assembly, homodimer. It depends on pyridoxal 5'-phosphate as a cofactor.

The protein resides in the peroxisome. It localises to the mitochondrion matrix. The enzyme catalyses L-serine + pyruvate = 3-hydroxypyruvate + L-alanine. It catalyses the reaction glyoxylate + L-alanine = glycine + pyruvate. In terms of biological role, catalyzes the transamination of glyoxylate to glycine and contributes to the glyoxylate detoxification. Catalyzes the transamination between L-serine and pyruvate and weakly contributes to gluconeogenesis from the L-serine metabolism. The sequence is that of Alanine--glyoxylate aminotransferase from Callithrix jacchus (White-tufted-ear marmoset).